The sequence spans 320 residues: 7-acetyl-epi-neemfruitin B aldo-keto reductase (320 aa).

Position 51 (Asp-51) interacts with NADP(+). Tyr-56 serves as the catalytic Proton donor. Residues Gln-186 and 264-272 each bind NADP(+); that span reads FNKQRMEEN.

Belongs to the aldo/keto reductase family. In terms of tissue distribution, mainly expressed in petioles and, to a lower extent, in roots.

The catalysed reaction is 7-acetyl-epi-neemfruitin B + AH2 + H2O = (1S,3bR,4R,5aR,9aR,9bR,11aS)-1-[(4R)-5-[(2S)-3,3-dimethyloxiran-2-yl]-1,4-dihydroxybutan-2-yl]-3b,6,6,9a,11a-pentamethyl-7-oxo-1H,2H,3bH,4H,5H,5aH,6H,7H,9aH,9bH,10H,11H,11aH-cyclopenta[a]phenanthren-4-yl acetate + acetate + A + H(+). The protein operates within secondary metabolite biosynthesis; terpenoid biosynthesis. In terms of biological role, aldo-keto reductase involved in the biosynthesis of limonoids triterpene natural products such as azadirachtin, an antifeedant widely used as bioinsecticide, and possessing many medicinal applications including anti-tumoral, anti-malarial, anti-rheumatic, antibacterial, anti-inflammatory, anti-pyretic and diuretic effects. Can use 7-acetyl-epi-neemfruitin B as substrate. This chain is 7-acetyl-epi-neemfruitin B aldo-keto reductase, found in Melia azedarach (Chinaberry tree).